A 378-amino-acid chain; its full sequence is MYEKILIRYGELTLKGKNRDSFIAQLARNIKLITGEYPETKYDRMFLTYSDANLEKLQYVFGITSYSPVIFCENNLEKITNSAIKLVNKDDKTFKISARRNNKKFELTSAEINQKVGASVLKHYPLIKVDVHNPECNINIEVRSDKTYLFSKTYEALGGLPVGISGSTLHLMSGGIDSPVAAFKLMKRGLKVSFLSFISPPQTDEKTIGKIKDLVSVLSKYQGKSHLYLANYSKLMNYISFTSNESYRINLMRRSFYRIASKFAKGKNIMTLSNGENLGQVASQTIESLSTIASASDLLILRPLIANDKVETINIAKQIKTYDISIEKAKETCELFAPKNPVTKPNLATALRLEEELTQLKDLEEELLANEIEHYTIE.

The region spanning 51 to 153 is the THUMP domain; the sequence is DANLEKLQYV…SDKTYLFSKT (103 aa). ATP-binding positions include 171 to 172, 196 to 197, R253, G275, and Q284; these read LM and SF.

This sequence belongs to the ThiI family.

The protein localises to the cytoplasm. It carries out the reaction [ThiI sulfur-carrier protein]-S-sulfanyl-L-cysteine + a uridine in tRNA + 2 reduced [2Fe-2S]-[ferredoxin] + ATP + H(+) = [ThiI sulfur-carrier protein]-L-cysteine + a 4-thiouridine in tRNA + 2 oxidized [2Fe-2S]-[ferredoxin] + AMP + diphosphate. It catalyses the reaction [ThiS sulfur-carrier protein]-C-terminal Gly-Gly-AMP + S-sulfanyl-L-cysteinyl-[cysteine desulfurase] + AH2 = [ThiS sulfur-carrier protein]-C-terminal-Gly-aminoethanethioate + L-cysteinyl-[cysteine desulfurase] + A + AMP + 2 H(+). It functions in the pathway cofactor biosynthesis; thiamine diphosphate biosynthesis. Catalyzes the ATP-dependent transfer of a sulfur to tRNA to produce 4-thiouridine in position 8 of tRNAs, which functions as a near-UV photosensor. Also catalyzes the transfer of sulfur to the sulfur carrier protein ThiS, forming ThiS-thiocarboxylate. This is a step in the synthesis of thiazole, in the thiamine biosynthesis pathway. The sulfur is donated as persulfide by IscS. The chain is Probable tRNA sulfurtransferase from Mycoplasmopsis agalactiae (strain NCTC 10123 / CIP 59.7 / PG2) (Mycoplasma agalactiae).